A 549-amino-acid polypeptide reads, in one-letter code: Neurofilament light polypeptide (549 aa).

N-acetylserine is present on Ser-2. A head region spans residues 2-92; sequence SSFYSEPYYS…KSIRTQEKAQ (91 aa). Thr-21 is a glycosylation site (O-linked (GlcNAc) threonine). At Arg-23 the chain carries Asymmetric dimethylarginine; alternate. Arg-23 carries the post-translational modification Omega-N-methylarginine; alternate. An O-linked (GlcNAc) serine glycan is attached at Ser-27. At Arg-30 the chain carries Omega-N-methylarginine. Tyr-43 carries the post-translational modification Phosphotyrosine. A phosphoserine mark is found at Ser-56, Ser-66, and Ser-102. In terms of domain architecture, IF rod spans 89–400; the sequence is EKAQLQDLND…KLLEGEETRL (312 aa). Residues 93-124 form a coil 1A region; it reads LQDLNDRFASFIERVHELEQQNKVLEAQLLVL. The interval 125–137 is linker 1; that stretch reads RQKHSEPSRFRAL. The coil 1B stretch occupies residues 138–233; sequence YEQEIRDLRL…KVHEEEIAEL (96 aa). Residues 234 to 252 are linker 12; sequence QAQIQYAQISVEMDVSSKP. The coil 2A stretch occupies residues 253–271; it reads DLSAALKDIRAQYEKLAAK. Residues 272-280 are linker 2; that stretch reads NMQNAEEWF. The coil 2B stretch occupies residues 281 to 396; sequence KSRFTVLTES…AAYRKLLEGE (116 aa). Residues 381-391 are epitope; recognized by IF-specific monoclonal antibody; it reads ALDIEIAAYRK. Positions 397–443 are tail, subdomain A; it reads ETRLSFTSVGSLTTGYSQSSQVFGRSAYGGLQTSSYLMSTRSFPSYY. Residues 397–549 form a tail region; it reads ETRLSFTSVG…GEEQATKKKD (153 aa). A tail, subdomain B (acidic) region spans residues 444 to 549; that stretch reads TSHVQEEQIE…GEEQATKKKD (106 aa). Residues 462–549 form a disordered region; sequence KAEEAKDEPP…GEEQATKKKD (88 aa). Over residues 471 to 534 the composition is skewed to acidic residues; the sequence is PSEGEAEEEG…ETKEAEEEEK (64 aa). At Ser-472 the chain carries Phosphoserine. Thr-526 is subject to Phosphothreonine. Over residues 535 to 549 the composition is skewed to basic and acidic residues; that stretch reads KDEGAGEEQATKKKD.

Belongs to the intermediate filament family. Forms homodimers (in vitro). Forms heterodimers with NEFH or NEFM; which can further hetero-oligomerize (in vitro). Forms heterodimers with INA (in vitro). Interacts with ARHGEF28. Interacts with TRIM2. In terms of processing, O-glycosylated. Phosphorylated in the head and rod regions by the PKC kinase PKN1, leading to the inhibition of polymerization. Post-translationally, ubiquitinated in the presence of TRIM2 and UBE2D1.

The protein localises to the cell projection. It localises to the axon. Its subcellular location is the cytoplasm. The protein resides in the cytoskeleton. Functionally, neurofilaments usually contain three intermediate filament proteins: NEFL, NEFM, and NEFH which are involved in the maintenance of neuronal caliber. May additionally cooperate with the neuronal intermediate filament proteins PRPH and INA to form neuronal filamentous networks. In Sus scrofa (Pig), this protein is Neurofilament light polypeptide (NEFL).